A 750-amino-acid polypeptide reads, in one-letter code: MAKASETERSGPGTQPADAQTATSATVRPLSTQAVFRPDFGDEDNFPHPTLGPDTEPQDRMATTSRVRPPVRRLGGGLVEIPRAPDIDPLEALMTNPVVPESKRFCWNCGRPVGRSDSETKGASEGWCPYCGSPYSFLPQLNPGDIVAGQYEVKGCIAHGGLGWIYLALDRNVNGRPVVLKGLVHSGDAEAQAMAMAERQFLAEVVHPSIVQIFNFVEHTDRHGDPVGYIVMEYVGGQSLKRSKGQKLPVAEAIAYLLEILPALSYLHSIGLVYNDLKPENIMLTEEQLKLIDLGAVSRINSFGYLYGTPGFQAPEIVRTGPTVATDIYTVGRTLAALTLDLPTRNGRYVDGLPEDDPVLKTYDSYGRLLRRAIDPDPRQRFTTAEEMSAQLTGVLREVVAQDTGVPRPGLSTIFSPSRSTFGVDLLVAHTDVYLDGQVHAEKLTANEIVTALSVPLVDPTDVAASVLQATVLSQPVQTLDSLRAARHGALDADGVDFSESVELPLMEVRALLDLGDVAKATRKLDDLAERVGWRWRLVWYRAVAELLTGDYDSATKHFTEVLDTFPGELAPKLALAATAELAGNTDEHKFYQTVWSTNDGVISAAFGLARARSAEGDRVGAVRTLDEVPPTSRHFTTARLTSAVTLLSGRSTSEVTEEQIRDAARRVEALPPTEPRVLQIRALVLGGALDWLKDNKASTNHILGFPFTSHGLRLGVEASLRSLARVAPTQRHRYTLVDMANKVRPTSTF.

Positions 1 to 66 (MAKASETERS…PQDRMATTSR (66 aa)) are disordered. Residues 17–34 (ADAQTATSATVRPLSTQA) show a composition bias toward polar residues. Residues 151–396 (YEVKGCIAHG…EMSAQLTGVL (246 aa)) form the Protein kinase domain. ATP contacts are provided by residues 157 to 165 (IAHGGLGWI) and Lys181. Catalysis depends on Asp276, which acts as the Proton acceptor.

This sequence belongs to the protein kinase superfamily. Ser/Thr protein kinase family. Autophosphorylated.

It carries out the reaction L-seryl-[protein] + ATP = O-phospho-L-seryl-[protein] + ADP + H(+). The catalysed reaction is L-threonyl-[protein] + ATP = O-phospho-L-threonyl-[protein] + ADP + H(+). The protein is Serine/threonine-protein kinase PknG (pknG) of Mycobacterium bovis (strain ATCC BAA-935 / AF2122/97).